The primary structure comprises 462 residues: Lysophospholipid acyltransferase 1 (462 aa).

The next 9 membrane-spanning stretches (helical) occupy residues serine 9–valine 29, phenylalanine 52–isoleucine 72, cysteine 84–methionine 104, serine 158–tyrosine 178, alanine 211–leucine 231, tyrosine 263–tryptophan 283, alanine 353–isoleucine 373, isoleucine 396–phenylalanine 416, and valine 431–alanine 451. Residue histidine 356 is part of the active site.

Belongs to the membrane-bound acyltransferase family. Expressed in roots, rosette leaves, petals, stigma, chalazal endosperm of developing seeds and vascular bundles of siliques.

The protein localises to the endoplasmic reticulum membrane. It carries out the reaction a 1-acyl-sn-glycero-3-phosphocholine + an acyl-CoA = a 1,2-diacyl-sn-glycero-3-phosphocholine + CoA. It catalyses the reaction 1-(9Z-octadecenoyl)-sn-glycero-3-phosphocholine + (9Z)-octadecenoyl-CoA = 1,2-di-(9Z-octadecenoyl)-sn-glycero-3-phosphocholine + CoA. The catalysed reaction is 1-(9Z-octadecenoyl)-sn-glycero-3-phosphocholine + (9Z,12Z)-octadecadienoyl-CoA = 1-(9Z)-octadecenoyl-2-(9Z,12Z)-octadecadienoyl-sn-glycero-3-phosphocholine + CoA. The enzyme catalyses (9Z,12Z,15Z)-octadecatrienoyl-CoA + 1-(9Z-octadecenoyl)-sn-glycero-3-phosphocholine = 1-(9Z-octadecaenoyl)-2-(9Z,12Z,15Z-octadecatrienoyl)-sn-glycero-3-phosphocholine + CoA. It carries out the reaction a 1-acyl-sn-glycero-3-phosphoethanolamine + an acyl-CoA = a 1,2-diacyl-sn-glycero-3-phosphoethanolamine + CoA. It catalyses the reaction a 1-acyl-sn-glycero-3-phospho-L-serine + an acyl-CoA = a 1,2-diacyl-sn-glycero-3-phospho-L-serine + CoA. Functionally, lysophospholipid acyltransferase with broad specificity. Mediates the conversion of lysophosphatidylethanolamine (1-acyl-sn-glycero-3-phosphoethanolamine or LPE) into phosphatidylethanolamine (1,2-diacyl-sn-glycero-3-phosphoethanolamine or PE) (LPEAT activity). Catalyzes the acylation of lysophosphatidylserine (1-acyl-2-hydroxy-sn-glycero-3-phospho-L-serine or LPS) into phosphatidylserine (1,2-diacyl-sn-glycero-3-phospho-L-serine or PS) (LPSAT activity). Can convert lysophosphatidylcholine (1-acyl-sn-glycero-3-phosphocholine or LPC) into phosphatidylcholine (1,2-diacyl-sn-glycero-3-phosphocholine or PC) (LPCAT activity). Exhibits preference for C18-unsaturated acyl-CoA when transferring an acyl group to lysophosphatidylcholine. Can also utilize lysophosphatidylglycerol (LPG) as substrate in vitro. Has neither activity towards lysophosphatidic acid (LPA) nor lysophosphatidylinositol (LPI). Lysophospholipid acyltransferases catalyze the reacylation step of the phospholipid remodeling pathway also known as the Lands cycle. The primary function of the Lands cycle is to provide a route for acyl remodeling to modify fatty acid (FA) composition of phospholipids derived from the Kennedy pathway. Is involved in PC acyl editing and phosphocholine headgroup exchange between PC and diacylglycerols. This processes control the majority of acyl fluxes through PC to provide polyunsaturated fatty acids for triacylglycerols synthesis in seeds. Involved with LPCAT2 in the direct incorporation of newly synthesized fatty acids exported form the chloroplast into PC through acyl editing. The polypeptide is Lysophospholipid acyltransferase 1 (Arabidopsis thaliana (Mouse-ear cress)).